Here is a 325-residue protein sequence, read N- to C-terminus: GMP reductase (325 aa).

Residue C173 is the Thioimidate intermediate of the active site. An NADP(+)-binding site is contributed by 202–225 (IIADGGIRDHGDIAKSVRFGASMV).

Belongs to the IMPDH/GMPR family. GuaC type 2 subfamily.

The enzyme catalyses IMP + NH4(+) + NADP(+) = GMP + NADPH + 2 H(+). Functionally, catalyzes the irreversible NADPH-dependent deamination of GMP to IMP. It functions in the conversion of nucleobase, nucleoside and nucleotide derivatives of G to A nucleotides, and in maintaining the intracellular balance of A and G nucleotides. The protein is GMP reductase of Variovorax paradoxus (strain S110).